A 113-amino-acid polypeptide reads, in one-letter code: Nucleoid-associated protein sync_0026 (113 aa).

Belongs to the YbaB/EbfC family. Homodimer.

The protein localises to the cytoplasm. It localises to the nucleoid. Its function is as follows. Binds to DNA and alters its conformation. May be involved in regulation of gene expression, nucleoid organization and DNA protection. This is Nucleoid-associated protein sync_0026 from Synechococcus sp. (strain CC9311).